The primary structure comprises 244 residues: Lymphotoxin-beta (244 aa).

Topologically, residues 1–18 are cytoplasmic; sequence MGALGLEGRGGRLQGRGS. A helical; Signal-anchor for type II membrane protein transmembrane segment spans residues 19-48; sequence LLLAVAGATSLVTLLLAVPITVLAVLALVP. Residues 49–244 lie on the Extracellular side of the membrane; it reads QDQGGLVTET…KTFFGAVMVG (196 aa). The THD domain maps to 88–243; sequence PAAHLIGAPL…GKTFFGAVMV (156 aa). Residue Asn222 is glycosylated (N-linked (GlcNAc...) asparagine).

This sequence belongs to the tumor necrosis factor family. As to quaternary structure, heterotrimer of either two LTB and one LTA subunits or (less prevalent) two LTA and one LTB subunits.

Its subcellular location is the membrane. Its function is as follows. Cytokine that binds to LTBR/TNFRSF3. May play a specific role in immune response regulation. Provides the membrane anchor for the attachment of the heterotrimeric complex to the cell surface. The sequence is that of Lymphotoxin-beta (LTB) from Pan troglodytes (Chimpanzee).